Reading from the N-terminus, the 508-residue chain is Polyamine oxidase FMS1 (508 aa).

Belongs to the flavin monoamine oxidase family. FAD is required as a cofactor.

It catalyses the reaction spermine + O2 + H2O = 3-aminopropanal + spermidine + H2O2. It carries out the reaction spermidine + O2 + H2O = 3-aminopropanal + putrescine + H2O2. The catalysed reaction is N(1)-acetylspermine + O2 + H2O = 3-acetamidopropanal + spermidine + H2O2. The enzyme catalyses N(1)-acetylspermidine + O2 + H2O = 3-acetamidopropanal + putrescine + H2O2. It catalyses the reaction N(8)-acetylspermidine + O2 + H2O = 4-acetamidobutanal + propane-1,3-diamine + H2O2. Functionally, involved in the production of beta-alanine, a precursor of pantothenic acid. Multicopy suppressor of fenpropimorph resistance. The protein is Polyamine oxidase FMS1 (FMS1) of Saccharomyces cerevisiae (strain ATCC 204508 / S288c) (Baker's yeast).